The following is a 130-amino-acid chain: Small ribosomal subunit protein uS9 (130 aa).

Residues 109-130 form a disordered region; it reads RKKERKKYGQPGARAKFQYSKR.

This sequence belongs to the universal ribosomal protein uS9 family.

The protein is Small ribosomal subunit protein uS9 of Maridesulfovibrio salexigens (strain ATCC 14822 / DSM 2638 / NCIMB 8403 / VKM B-1763) (Desulfovibrio salexigens).